Consider the following 443-residue polypeptide: ATP-dependent protease ATPase subunit HslU (443 aa).

ATP is bound by residues I18 and 60 to 65 (GVGKTE). Positions 141–165 (DQWGQNEENDTDSSTRQSFRKKLRE) are disordered. ATP is bound by residues D256, E321, and R393.

The protein belongs to the ClpX chaperone family. HslU subfamily. A double ring-shaped homohexamer of HslV is capped on each side by a ring-shaped HslU homohexamer. The assembly of the HslU/HslV complex is dependent on binding of ATP.

It localises to the cytoplasm. Its function is as follows. ATPase subunit of a proteasome-like degradation complex; this subunit has chaperone activity. The binding of ATP and its subsequent hydrolysis by HslU are essential for unfolding of protein substrates subsequently hydrolyzed by HslV. HslU recognizes the N-terminal part of its protein substrates and unfolds these before they are guided to HslV for hydrolysis. In Photobacterium profundum (strain SS9), this protein is ATP-dependent protease ATPase subunit HslU.